The following is a 128-amino-acid chain: Large ribosomal subunit protein bL17 (128 aa).

This sequence belongs to the bacterial ribosomal protein bL17 family. As to quaternary structure, part of the 50S ribosomal subunit. Contacts protein L32.

This is Large ribosomal subunit protein bL17 from Streptococcus pneumoniae serotype 4 (strain ATCC BAA-334 / TIGR4).